A 312-amino-acid chain; its full sequence is Ribosomal RNA small subunit methyltransferase H (312 aa).

S-adenosyl-L-methionine contacts are provided by residues 33-35 (AGH), D52, F79, D100, and Q107.

This sequence belongs to the methyltransferase superfamily. RsmH family.

It localises to the cytoplasm. It carries out the reaction cytidine(1402) in 16S rRNA + S-adenosyl-L-methionine = N(4)-methylcytidine(1402) in 16S rRNA + S-adenosyl-L-homocysteine + H(+). Specifically methylates the N4 position of cytidine in position 1402 (C1402) of 16S rRNA. This is Ribosomal RNA small subunit methyltransferase H from Finegoldia magna (strain ATCC 29328 / DSM 20472 / WAL 2508) (Peptostreptococcus magnus).